A 574-amino-acid chain; its full sequence is Proline--tRNA ligase (574 aa).

This sequence belongs to the class-II aminoacyl-tRNA synthetase family. ProS type 1 subfamily. In terms of assembly, homodimer.

The protein localises to the cytoplasm. The enzyme catalyses tRNA(Pro) + L-proline + ATP = L-prolyl-tRNA(Pro) + AMP + diphosphate. Catalyzes the attachment of proline to tRNA(Pro) in a two-step reaction: proline is first activated by ATP to form Pro-AMP and then transferred to the acceptor end of tRNA(Pro). As ProRS can inadvertently accommodate and process non-cognate amino acids such as alanine and cysteine, to avoid such errors it has two additional distinct editing activities against alanine. One activity is designated as 'pretransfer' editing and involves the tRNA(Pro)-independent hydrolysis of activated Ala-AMP. The other activity is designated 'posttransfer' editing and involves deacylation of mischarged Ala-tRNA(Pro). The misacylated Cys-tRNA(Pro) is not edited by ProRS. This is Proline--tRNA ligase from Hahella chejuensis (strain KCTC 2396).